A 296-amino-acid polypeptide reads, in one-letter code: Phosphoribosylaminoimidazole-succinocarboxamide synthase (296 aa).

The protein belongs to the SAICAR synthetase family.

It carries out the reaction 5-amino-1-(5-phospho-D-ribosyl)imidazole-4-carboxylate + L-aspartate + ATP = (2S)-2-[5-amino-1-(5-phospho-beta-D-ribosyl)imidazole-4-carboxamido]succinate + ADP + phosphate + 2 H(+). Its pathway is purine metabolism; IMP biosynthesis via de novo pathway; 5-amino-1-(5-phospho-D-ribosyl)imidazole-4-carboxamide from 5-amino-1-(5-phospho-D-ribosyl)imidazole-4-carboxylate: step 1/2. This chain is Phosphoribosylaminoimidazole-succinocarboxamide synthase, found in Citrifermentans bemidjiense (strain ATCC BAA-1014 / DSM 16622 / JCM 12645 / Bem) (Geobacter bemidjiensis).